The following is a 549-amino-acid chain: SET and MYND domain-containing protein DDB_G0277331 (549 aa).

An SET domain is found at 27-283; sequence KGIELRYCDG…KDEELFINYS (257 aa). Positions 71, 74, 90, 93, 99, 103, 111, and 115 each coordinate Zn(2+). The segment at 71–115 adopts an MYND-type zinc-finger fold; that stretch reads CDECLKNKLDLEEGKTLKRCSNCKLVYYCSTDCQTKAWKIHKQEC. Residues 340–401 adopt a coiled-coil conformation; the sequence is NINNNNNNNN…IIKNLQNKLS (62 aa).

The protein belongs to the class V-like SAM-binding methyltransferase superfamily.

Its function is as follows. Probable methyltransferase. The chain is SET and MYND domain-containing protein DDB_G0277331 from Dictyostelium discoideum (Social amoeba).